A 534-amino-acid polypeptide reads, in one-letter code: CTP synthase (534 aa).

The segment at methionine 1 to isoleucine 266 is amidoligase domain. Residue serine 14 participates in CTP binding. Serine 14 is a binding site for UTP. ATP is bound by residues serine 15–leucine 20 and aspartate 72. Aspartate 72 and glutamate 140 together coordinate Mg(2+). CTP is bound by residues aspartate 147–glutamate 149, lysine 187–glutamine 192, and lysine 223. UTP contacts are provided by residues lysine 187–glutamine 192 and lysine 223. Residues arginine 292 to alanine 534 form the Glutamine amidotransferase type-1 domain. Glycine 354 serves as a coordination point for L-glutamine. The active-site Nucleophile; for glutamine hydrolysis is cysteine 381. Residues leucine 382–glutamine 385, glutamate 405, and arginine 462 contribute to the L-glutamine site. Residues histidine 507 and glutamate 509 contribute to the active site.

The protein belongs to the CTP synthase family. As to quaternary structure, homotetramer.

The enzyme catalyses UTP + L-glutamine + ATP + H2O = CTP + L-glutamate + ADP + phosphate + 2 H(+). It carries out the reaction L-glutamine + H2O = L-glutamate + NH4(+). It catalyses the reaction UTP + NH4(+) + ATP = CTP + ADP + phosphate + 2 H(+). It participates in pyrimidine metabolism; CTP biosynthesis via de novo pathway; CTP from UDP: step 2/2. Allosterically activated by GTP, when glutamine is the substrate; GTP has no effect on the reaction when ammonia is the substrate. The allosteric effector GTP functions by stabilizing the protein conformation that binds the tetrahedral intermediate(s) formed during glutamine hydrolysis. Inhibited by the product CTP, via allosteric rather than competitive inhibition. In terms of biological role, catalyzes the ATP-dependent amination of UTP to CTP with either L-glutamine or ammonia as the source of nitrogen. Regulates intracellular CTP levels through interactions with the four ribonucleotide triphosphates. This chain is CTP synthase, found in Geotalea uraniireducens (strain Rf4) (Geobacter uraniireducens).